A 360-amino-acid polypeptide reads, in one-letter code: Peptide chain release factor 1 (360 aa).

Q236 bears the N5-methylglutamine mark. Residues 288–308 (QDEQDAERKSTIGTGDRSERI) form a disordered region. Basic and acidic residues predominate over residues 293–308 (AERKSTIGTGDRSERI).

This sequence belongs to the prokaryotic/mitochondrial release factor family. Post-translationally, methylated by PrmC. Methylation increases the termination efficiency of RF1.

The protein resides in the cytoplasm. Functionally, peptide chain release factor 1 directs the termination of translation in response to the peptide chain termination codons UAG and UAA. In Streptococcus equi subsp. zooepidemicus (strain H70), this protein is Peptide chain release factor 1.